Here is an 85-residue protein sequence, read N- to C-terminus: Small ribosomal subunit protein uS17 (85 aa).

This sequence belongs to the universal ribosomal protein uS17 family. As to quaternary structure, part of the 30S ribosomal subunit.

Its function is as follows. One of the primary rRNA binding proteins, it binds specifically to the 5'-end of 16S ribosomal RNA. The chain is Small ribosomal subunit protein uS17 from Actinobacillus succinogenes (strain ATCC 55618 / DSM 22257 / CCUG 43843 / 130Z).